A 411-amino-acid chain; its full sequence is Serine--tRNA ligase (411 aa).

226–228 (TSE) contributes to the L-serine binding site. Residue 257–259 (RKE) coordinates ATP. Position 280 (Glu280) interacts with L-serine. 344-347 (EISS) provides a ligand contact to ATP. Ser379 lines the L-serine pocket.

The protein belongs to the class-II aminoacyl-tRNA synthetase family. Type-1 seryl-tRNA synthetase subfamily. As to quaternary structure, homodimer. The tRNA molecule binds across the dimer.

It is found in the cytoplasm. It carries out the reaction tRNA(Ser) + L-serine + ATP = L-seryl-tRNA(Ser) + AMP + diphosphate + H(+). It catalyses the reaction tRNA(Sec) + L-serine + ATP = L-seryl-tRNA(Sec) + AMP + diphosphate + H(+). The protein operates within aminoacyl-tRNA biosynthesis; selenocysteinyl-tRNA(Sec) biosynthesis; L-seryl-tRNA(Sec) from L-serine and tRNA(Sec): step 1/1. Catalyzes the attachment of serine to tRNA(Ser). Is also able to aminoacylate tRNA(Sec) with serine, to form the misacylated tRNA L-seryl-tRNA(Sec), which will be further converted into selenocysteinyl-tRNA(Sec). The chain is Serine--tRNA ligase from Campylobacter jejuni subsp. jejuni serotype O:6 (strain 81116 / NCTC 11828).